The chain runs to 150 residues: MDSRKLSPRGKKLESHLSQEHRRPPLGLIAAWGQPSIQSSVQQGLQTQDWVCEPPERRRPGRRWSVSIDERRRLATLGGRERPGAAGTQLHCRDVVQMVAQLVSEDVDKDVLLPHPLRSTESTNAFQAFLARSAPFWHNATFEASRSPPS.

Residues 1-23 (MDSRKLSPRGKKLESHLSQEHRR) are compositionally biased toward basic and acidic residues. A disordered region spans residues 1 to 26 (MDSRKLSPRGKKLESHLSQEHRRPPL).

Its subcellular location is the cytoplasm. The protein localises to the cytoplasmic vesicle. It is found in the secretory vesicle. It localises to the acrosome. This Homo sapiens (Human) protein is Testis-expressed protein 22 (TEX22).